Consider the following 266-residue polypeptide: Vitamin B12-binding protein (266 aa).

An N-terminal signal peptide occupies residues 1 to 22 (MAKSLFRALVALSFLAPLWLNA). In terms of domain architecture, Fe/B12 periplasmic-binding spans 25–266 (RVITLSPANT…QLCNALSQVD (242 aa)). Cyanocob(III)alamin is bound by residues Tyr50 and 242-246 (DWFER). The cysteines at positions 183 and 259 are disulfide-linked.

This sequence belongs to the BtuF family. As to quaternary structure, the complex is composed of two ATP-binding proteins (BtuD), two transmembrane proteins (BtuC) and a solute-binding protein (BtuF).

It is found in the periplasm. Its function is as follows. Part of the ABC transporter complex BtuCDF involved in vitamin B12 import. Binds vitamin B12 and delivers it to the periplasmic surface of BtuC. This is Vitamin B12-binding protein from Shigella flexneri.